The primary structure comprises 610 residues: Elongation factor 4 (610 aa).

In terms of domain architecture, tr-type G spans 12 to 194; that stretch reads EKIRNFSIIA…QIVEKVPAPQ (183 aa). Residues 24–29 and 141–144 contribute to the GTP site; these read DHGKST and NKID.

It belongs to the TRAFAC class translation factor GTPase superfamily. Classic translation factor GTPase family. LepA subfamily.

Its subcellular location is the cell membrane. The catalysed reaction is GTP + H2O = GDP + phosphate + H(+). In terms of biological role, required for accurate and efficient protein synthesis under certain stress conditions. May act as a fidelity factor of the translation reaction, by catalyzing a one-codon backward translocation of tRNAs on improperly translocated ribosomes. Back-translocation proceeds from a post-translocation (POST) complex to a pre-translocation (PRE) complex, thus giving elongation factor G a second chance to translocate the tRNAs correctly. Binds to ribosomes in a GTP-dependent manner. This Streptococcus thermophilus (strain CNRZ 1066) protein is Elongation factor 4.